Here is a 257-residue protein sequence, read N- to C-terminus: UPF0246 protein Sbal223_3241 (257 aa).

The protein belongs to the UPF0246 family.

This chain is UPF0246 protein Sbal223_3241, found in Shewanella baltica (strain OS223).